The chain runs to 70 residues: Protein SlyX homolog (70 aa).

Belongs to the SlyX family.

This chain is Protein SlyX homolog, found in Shewanella denitrificans (strain OS217 / ATCC BAA-1090 / DSM 15013).